Here is a 119-residue protein sequence, read N- to C-terminus: Ribonuclease P protein component (119 aa).

The protein belongs to the RnpA family. In terms of assembly, consists of a catalytic RNA component (M1 or rnpB) and a protein subunit.

The catalysed reaction is Endonucleolytic cleavage of RNA, removing 5'-extranucleotides from tRNA precursor.. Its function is as follows. RNaseP catalyzes the removal of the 5'-leader sequence from pre-tRNA to produce the mature 5'-terminus. It can also cleave other RNA substrates such as 4.5S RNA. The protein component plays an auxiliary but essential role in vivo by binding to the 5'-leader sequence and broadening the substrate specificity of the ribozyme. The chain is Ribonuclease P protein component from Pasteurella multocida (strain Pm70).